The chain runs to 131 residues: Small ribosomal subunit protein uS11 (131 aa).

This sequence belongs to the universal ribosomal protein uS11 family. In terms of assembly, part of the 30S ribosomal subunit. Interacts with proteins S7 and S18. Binds to IF-3.

Its function is as follows. Located on the platform of the 30S subunit, it bridges several disparate RNA helices of the 16S rRNA. Forms part of the Shine-Dalgarno cleft in the 70S ribosome. This is Small ribosomal subunit protein uS11 from Geobacter metallireducens (strain ATCC 53774 / DSM 7210 / GS-15).